The sequence spans 214 residues: Chaperone protein TorD (214 aa).

The protein belongs to the TorD/DmsD family. TorD subfamily.

The protein resides in the cytoplasm. Functionally, involved in the biogenesis of TorA. Acts on TorA before the insertion of the molybdenum cofactor and, as a result, probably favors a conformation of the apoenzyme that is competent for acquiring the cofactor. In Aeromonas salmonicida (strain A449), this protein is Chaperone protein TorD.